A 266-amino-acid chain; its full sequence is Glucosamine-6-phosphate deaminase (266 aa).

D72 functions as the Proton acceptor; for enolization step in the catalytic mechanism. D141 acts as the For ring-opening step in catalysis. The Proton acceptor; for ring-opening step role is filled by H143. The For ring-opening step role is filled by E148.

Belongs to the glucosamine/galactosamine-6-phosphate isomerase family. NagB subfamily. In terms of assembly, homohexamer; trimer of disulfide-linked dimers.

The catalysed reaction is alpha-D-glucosamine 6-phosphate + H2O = beta-D-fructose 6-phosphate + NH4(+). It participates in amino-sugar metabolism; N-acetylneuraminate degradation; D-fructose 6-phosphate from N-acetylneuraminate: step 5/5. Allosterically activated by N-acetylglucosamine 6-phosphate (GlcNAc6P). Its function is as follows. Catalyzes the reversible isomerization-deamination of glucosamine 6-phosphate (GlcN6P) to form fructose 6-phosphate (Fru6P) and ammonium ion. This chain is Glucosamine-6-phosphate deaminase, found in Escherichia coli O6:H1 (strain CFT073 / ATCC 700928 / UPEC).